A 1769-amino-acid chain; its full sequence is U3 small nucleolar RNA-associated protein 10 (1769 aa).

Ser-2 carries the post-translational modification N-acetylserine. The HEAT repeat unit spans residues 1729–1767 (LVPVIAELLEDDDEEIEREVRTGLVKVVENVLGEPFDRY).

Belongs to the HEATR1/UTP10 family. Interacts with snoRNA U3. Interacts with MPP10. Component of the ribosomal small subunit (SSU) processome composed of at least 40 protein subunits and snoRNA U3. In the absence of snoRNA3, forms a complex with other t-UTPs. This complex can associate with pre-18S ribosomal RNAs.

It localises to the nucleus. Its subcellular location is the nucleolus. The protein localises to the mitochondrion. Functionally, involved in nucleolar processing of pre-18S ribosomal RNA. Required for optimal pre-ribosomal RNA transcription by RNA polymerase I together with a subset of U3 proteins required for transcription (t-UTPs). Involved in ribosome biosynthesis. This is U3 small nucleolar RNA-associated protein 10 (UTP10) from Saccharomyces cerevisiae (strain ATCC 204508 / S288c) (Baker's yeast).